The chain runs to 219 residues: Probable GTP-binding protein EngB (219 aa).

Residues 40 to 212 (LLPEIAFIGK…KASLAKCIIK (173 aa)) enclose the EngB-type G domain. GTP-binding positions include 48 to 55 (GKSNVGKS), 75 to 79 (GRTGQ), 93 to 96 (DLPG), 160 to 163 (TKFD), and 191 to 193 (VSS). S55 and T77 together coordinate Mg(2+).

It belongs to the TRAFAC class TrmE-Era-EngA-EngB-Septin-like GTPase superfamily. EngB GTPase family. The cofactor is Mg(2+).

Necessary for normal cell division and for the maintenance of normal septation. This Rickettsia canadensis (strain McKiel) protein is Probable GTP-binding protein EngB.